Here is a 188-residue protein sequence, read N- to C-terminus: Pyridoxal 5'-phosphate synthase subunit PdxT (188 aa).

46-48 serves as a coordination point for L-glutamine; that stretch reads GES. Cysteine 78 functions as the Nucleophile in the catalytic mechanism. Residues arginine 105 and 134 to 135 contribute to the L-glutamine site; that span reads IR. Catalysis depends on charge relay system residues histidine 170 and glutamate 172.

Belongs to the glutaminase PdxT/SNO family. As to quaternary structure, in the presence of PdxS, forms a dodecamer of heterodimers. Only shows activity in the heterodimer.

It catalyses the reaction aldehydo-D-ribose 5-phosphate + D-glyceraldehyde 3-phosphate + L-glutamine = pyridoxal 5'-phosphate + L-glutamate + phosphate + 3 H2O + H(+). The enzyme catalyses L-glutamine + H2O = L-glutamate + NH4(+). The protein operates within cofactor biosynthesis; pyridoxal 5'-phosphate biosynthesis. Catalyzes the hydrolysis of glutamine to glutamate and ammonia as part of the biosynthesis of pyridoxal 5'-phosphate. The resulting ammonia molecule is channeled to the active site of PdxS. This Clostridium kluyveri (strain ATCC 8527 / DSM 555 / NBRC 12016 / NCIMB 10680 / K1) protein is Pyridoxal 5'-phosphate synthase subunit PdxT.